The sequence spans 131 residues: Small ribosomal subunit protein uS9 (131 aa).

It belongs to the universal ribosomal protein uS9 family.

This Actinobacillus pleuropneumoniae serotype 5b (strain L20) protein is Small ribosomal subunit protein uS9.